We begin with the raw amino-acid sequence, 1489 residues long: Type-2 histone deacetylase 1 (1489 aa).

Low complexity-rich tracts occupy residues 135-163, 190-259, 281-306, and 325-399; these read NNNN…SPSG, SNGN…SRNL, NIIN…TSTT, and SPTS…NINN. 5 disordered regions span residues 135-259, 281-556, 915-935, 955-1024, and 1151-1185; these read NNNN…SRNL, NIIN…NYQQ, NNNN…DDQL, NISK…RDRD, and STGI…GEQC. Over residues 400–430 the composition is skewed to polar residues; it reads VANGTPRPSLQTSRLQGKLPSPQQYNTSPSH. 4 stretches are compositionally biased toward low complexity: residues 431 to 450, 486 to 553, 915 to 928, and 959 to 988; these read QQYP…PIQS, NNNN…NNSN, and NNNN…NNNN. Basic and acidic residues-rich tracts occupy residues 989–1001 and 1010–1024; these read RNRD…ERDN and IEKE…RDRD. Low complexity predominate over residues 1158–1180; sequence STSTPITTTGTATVTPGSTTSST. The active-site Proton acceptor is H1232. The span at 1325–1335 shows a compositional bias: acidic residues; that stretch reads EQNDYDDDDNN. Residues 1325–1374 form a disordered region; sequence EQNDYDDDDNNNDVNNNNNNNNNNNNNNNNNNNNKNNNNNNSNSITQQST. Positions 1336–1367 are enriched in low complexity; that stretch reads NDVNNNNNNNNNNNNNNNNNNNNKNNNNNNSN.

It belongs to the histone deacetylase family. HD type 2 subfamily.

It localises to the nucleus. It is found in the cytoplasm. The enzyme catalyses N(6)-acetyl-L-lysyl-[histone] + H2O = L-lysyl-[histone] + acetate. Functionally, responsible for the deacetylation of lysine residues on the N-terminal part of the core histones (H2A, H2B, H3 and H4). Histone deacetylation plays an important role in transcriptional regulation, cell cycle progression and developmental events. Histone deacetylases act via the formation of large multiprotein complexes. In Dictyostelium discoideum (Social amoeba), this protein is Type-2 histone deacetylase 1 (hdaD).